We begin with the raw amino-acid sequence, 180 residues long: MKIALSGKSGCGNTTVSGMIAKHYGLEFINYTFHDIAREHNIPFSEFYEKEIIGRNDYYWDKYLDNRLSVLSRKNNTVLASRLAIWISKSADLKIYLYAKMEVRAERIMTREGGMYSDVLSSTFIRDENDKKRYLAIYNIDIDDYFSETDLVIDVTNINPNEVFELIRDEIDKRNLKKNS.

7–15 (GKSGCGNTT) is an ATP binding site.

This sequence belongs to the cytidylate kinase family. Type 2 subfamily.

It localises to the cytoplasm. It catalyses the reaction CMP + ATP = CDP + ADP. The catalysed reaction is dCMP + ATP = dCDP + ADP. This chain is Cytidylate kinase 2 (cmk2), found in Borreliella burgdorferi (strain ATCC 35210 / DSM 4680 / CIP 102532 / B31) (Borrelia burgdorferi).